The chain runs to 406 residues: MALSVPPIAGAIIGYFTNDLAITMLFRPYKPIKIGQRTLPFTPGLIPANQERLARRISDAIMGSLLTPEELQKLTRRLLQTERVQAAIQWLLKMALDQVQSETEQKSAQVLAHILHDLLGSAIPRLIRVWARREDFLEAQLNQIFDQVLLELKLSEEQAGRIADWLLQVVLPPDRLRQTLIDFLTDRNIQVIDEDLREKTSGTYWVVANLFGVRNTLIRLRDFCIEEREACNVRLAELMDALGVRQRLIEGLQDLSLQNLPVATVRQLRKVFRQNVRIYIQSQGLELVKGLSDSLNWEHVSLSILNRLRSSTAVTASLEVVSQELALVLERYLERDLEIIVEKAIPILNLDEVIVERVKATTPQELEAAIQGIVKSELQAIVTLGGVLGLLIGIAQSVLLLVQGGL.

Residues 381-401 traverse the membrane as a helical segment; the sequence is IVTLGGVLGLLIGIAQSVLLL.

It belongs to the UPF0754 family.

Its subcellular location is the cell inner membrane. The chain is UPF0754 membrane protein Cyan7425_4067 from Cyanothece sp. (strain PCC 7425 / ATCC 29141).